Reading from the N-terminus, the 356-residue chain is Protein RecA (356 aa).

Residue 69–76 participates in ATP binding; the sequence is GPESSGKT.

The protein belongs to the RecA family.

The protein resides in the cytoplasm. In terms of biological role, can catalyze the hydrolysis of ATP in the presence of single-stranded DNA, the ATP-dependent uptake of single-stranded DNA by duplex DNA, and the ATP-dependent hybridization of homologous single-stranded DNAs. It interacts with LexA causing its activation and leading to its autocatalytic cleavage. The polypeptide is Protein RecA (Gloeothece citriformis (strain PCC 7424) (Cyanothece sp. (strain PCC 7424))).